Consider the following 231-residue polypeptide: Ion-translocating oxidoreductase complex subunit E (231 aa).

Helical transmembrane passes span 18–38, 39–59, 63–83, 86–106, 125–145, and 182–202; these read ALVQ…ATNA, LGLG…ISTL, TPAE…VSAV, LINA…PLIV, ALSA…MFVL, and PFLL…MLAG.

This sequence belongs to the NqrDE/RnfAE family. In terms of assembly, the complex is composed of six subunits: RsxA, RsxB, RsxC, RsxD, RsxE and RsxG.

The protein resides in the cell inner membrane. Functionally, part of a membrane-bound complex that couples electron transfer with translocation of ions across the membrane. Required to maintain the reduced state of SoxR. In Shigella flexneri serotype 5b (strain 8401), this protein is Ion-translocating oxidoreductase complex subunit E.